The sequence spans 451 residues: Probable beta-1,4-xylosyltransferase GT43E (451 aa).

Over 1 to 88 (MVSSRRNTGG…SKSRGLSCKR (88 aa)) the chain is Cytoplasmic. The chain crosses the membrane as a helical; Signal-anchor for type II membrane protein span at residues 89–109 (LAFHLFVCFMVGIFIGFMPFF). Residues 110-451 (SVDVSQKIVS…KNLDAVIPVT (342 aa)) lie on the Lumenal side of the membrane. N-linked (GlcNAc...) asparagine glycans are attached at residues asparagine 260 and asparagine 366.

It belongs to the glycosyltransferase 43 family.

The protein resides in the golgi apparatus membrane. Its function is as follows. Probable beta-1,4-xylosyltransferase involved in xylan biosynthesis in cell walls. This Oryza sativa subsp. japonica (Rice) protein is Probable beta-1,4-xylosyltransferase GT43E.